The following is a 534-amino-acid chain: Probable bifunctional tRNA threonylcarbamoyladenosine biosynthesis protein (534 aa).

The tract at residues 1 to 325 is kae1; that stretch reads MLCLGIEGTA…YRTDEVDVPW (325 aa). Residues His-108, His-112, and Tyr-129 each coordinate Fe cation. Residues 129-133, Asp-161, Gly-174, Glu-178, and Asn-258 each bind L-threonylcarbamoyladenylate; that span reads YVSGG. Asp-286 provides a ligand contact to Fe cation. The region spanning 335–534 is the Protein kinase domain; the sequence is LPPDILAKGA…EIESRGRYTD (200 aa). Residues 340–348 and Lys-361 each bind ATP; that span reads LAKGAEANI. Asp-451 (proton acceptor; for kinase activity) is an active-site residue.

It in the N-terminal section; belongs to the KAE1 / TsaD family. In the C-terminal section; belongs to the protein kinase superfamily. Tyr protein kinase family. BUD32 subfamily. In terms of assembly, component of the KEOPS complex that consists of Kae1, Bud32, Cgi121 and Pcc1; the whole complex dimerizes. Fe(2+) is required as a cofactor.

Its subcellular location is the cytoplasm. The enzyme catalyses L-seryl-[protein] + ATP = O-phospho-L-seryl-[protein] + ADP + H(+). It catalyses the reaction L-threonyl-[protein] + ATP = O-phospho-L-threonyl-[protein] + ADP + H(+). It carries out the reaction L-threonylcarbamoyladenylate + adenosine(37) in tRNA = N(6)-L-threonylcarbamoyladenosine(37) in tRNA + AMP + H(+). Required for the formation of a threonylcarbamoyl group on adenosine at position 37 (t(6)A37) in tRNAs that read codons beginning with adenine. Is a component of the KEOPS complex that is probably involved in the transfer of the threonylcarbamoyl moiety of threonylcarbamoyl-AMP (TC-AMP) to the N6 group of A37. The Kae1 domain likely plays a direct catalytic role in this reaction. The Bud32 domain probably displays kinase activity that regulates Kae1 function. The chain is Probable bifunctional tRNA threonylcarbamoyladenosine biosynthesis protein from Methanothermobacter thermautotrophicus (strain ATCC 29096 / DSM 1053 / JCM 10044 / NBRC 100330 / Delta H) (Methanobacterium thermoautotrophicum).